We begin with the raw amino-acid sequence, 392 residues long: Outer membrane protein assembly factor BamB (392 aa).

The first 19 residues, 1–19, serve as a signal peptide directing secretion; the sequence is MQLRKLLLPGLLSVTLLSG. Residue Cys20 is the site of N-palmitoyl cysteine attachment. Cys20 is lipidated: S-diacylglycerol cysteine.

The protein belongs to the BamB family. Part of the Bam complex, which is composed of the outer membrane protein BamA, and four lipoproteins BamB, BamC, BamD and BamE.

It localises to the cell outer membrane. Its function is as follows. Part of the outer membrane protein assembly complex, which is involved in assembly and insertion of beta-barrel proteins into the outer membrane. This is Outer membrane protein assembly factor BamB from Shigella dysenteriae serotype 1 (strain Sd197).